A 208-amino-acid chain; its full sequence is Uracil phosphoribosyltransferase (208 aa).

5-phospho-alpha-D-ribose 1-diphosphate contacts are provided by residues R78, R103, and 130-138 (DPMLATGGS). Uracil-binding positions include I193 and 198–200 (GDA). 5-phospho-alpha-D-ribose 1-diphosphate is bound at residue D199.

The protein belongs to the UPRTase family. Mg(2+) serves as cofactor.

The enzyme catalyses UMP + diphosphate = 5-phospho-alpha-D-ribose 1-diphosphate + uracil. The protein operates within pyrimidine metabolism; UMP biosynthesis via salvage pathway; UMP from uracil: step 1/1. With respect to regulation, allosterically activated by GTP. Catalyzes the conversion of uracil and 5-phospho-alpha-D-ribose 1-diphosphate (PRPP) to UMP and diphosphate. The sequence is that of Uracil phosphoribosyltransferase from Photorhabdus laumondii subsp. laumondii (strain DSM 15139 / CIP 105565 / TT01) (Photorhabdus luminescens subsp. laumondii).